Here is a 630-residue protein sequence, read N- to C-terminus: YTH domain-containing family protein 1 (630 aa).

Disordered regions lie at residues 38–113 (DMTQ…YMQQ), 160–183 (YYPQGAQFPNHGPMPQNSMLAGPY), and 200–241 (QVGD…QSGH). The span at 70-102 (PGQQQQHQYGSPPNTNGNAQPMPQAHGNNTMNS) shows a compositional bias: polar residues. The region spanning 382 to 590 (EKYFILKSLT…SVGRKLTGLF (209 aa)) is the YTH domain.

It belongs to the YTHDF family. YTHDF1 subfamily.

It localises to the cytoplasm. Its subcellular location is the P-body. Functionally, specifically recognizes and binds N6-methyladenosine (m6A)-containing mRNAs, and regulates their stability. M6A is a modification present at internal sites of mRNAs and some non-coding RNAs and plays a role in mRNA stability and processing. Plays a role in pathogenicity towards plant host. This is YTH domain-containing family protein 1 from Pyricularia oryzae (strain 70-15 / ATCC MYA-4617 / FGSC 8958) (Rice blast fungus).